The primary structure comprises 352 residues: B1 bradykinin receptor (352 aa).

At 1–41 (MASWPPLELQSSNQSQLFPQNATACDNAPEAWDLLHRVLPT) the chain is on the extracellular side. 2 N-linked (GlcNAc...) asparagine glycosylation sites follow: Asn-13 and Asn-21. The helical transmembrane segment at 42–62 (FIISICSFGLLGNLFVLLVFL) threads the bilayer. Residues 63-72 (LPRRRLNVAE) lie on the Cytoplasmic side of the membrane. Residues 73 to 93 (IYLANLAASDLVFVLGLPFWA) traverse the membrane as a helical segment. At 94-110 (ENIWNQFNWPFGALLCR) the chain is on the extracellular side. Cysteines 109 and 188 form a disulfide. A helical membrane pass occupies residues 111–131 (GINGVIKANLFISIFLVVAIS). Residues 132–153 (QDRYCLLVHPMASRRRQRRRQA) lie on the Cytoplasmic side of the membrane. A helical membrane pass occupies residues 154–174 (RVTCVLIWVVGGLLSIPTFLL). Over 175 to 206 (RSIQAVPDLNITACILLLPHEAWHFARIVELN) the chain is Extracellular. Asn-184 carries N-linked (GlcNAc...) asparagine glycosylation. Residues 207-227 (ILAFLLPLAAIVFFNYHILAS) traverse the membrane as a helical segment. Topologically, residues 228-250 (LRGREEVSRTRCGGRKDSKTTAL) are cytoplasmic. A helical membrane pass occupies residues 251-271 (ILTLVVAFLVCWAPYHFFAFL). At 272-294 (EFLFQVQAIRGCFWEDFIDLGLQ) the chain is on the extracellular side. Residues 295-315 (LANFLAFTNSSLNPVIYVFVG) traverse the membrane as a helical segment. Topologically, residues 316–352 (RLFRTKVWELYKQCTPKSLAPISSSHRKEIFQLFWRN) are cytoplasmic. Residue Cys-329 is the site of S-palmitoyl cysteine attachment.

The protein belongs to the G-protein coupled receptor 1 family. Bradykinin receptor subfamily. BDKRB1 sub-subfamily.

The protein localises to the cell membrane. Functionally, this is a receptor for bradykinin. Could be a factor in chronic pain and inflammation. The protein is B1 bradykinin receptor (BDKRB1) of Chlorocebus aethiops (Green monkey).